We begin with the raw amino-acid sequence, 567 residues long: Proline--tRNA ligase (567 aa).

This sequence belongs to the class-II aminoacyl-tRNA synthetase family. ProS type 1 subfamily. Homodimer.

It is found in the cytoplasm. It catalyses the reaction tRNA(Pro) + L-proline + ATP = L-prolyl-tRNA(Pro) + AMP + diphosphate. Functionally, catalyzes the attachment of proline to tRNA(Pro) in a two-step reaction: proline is first activated by ATP to form Pro-AMP and then transferred to the acceptor end of tRNA(Pro). As ProRS can inadvertently accommodate and process non-cognate amino acids such as alanine and cysteine, to avoid such errors it has two additional distinct editing activities against alanine. One activity is designated as 'pretransfer' editing and involves the tRNA(Pro)-independent hydrolysis of activated Ala-AMP. The other activity is designated 'posttransfer' editing and involves deacylation of mischarged Ala-tRNA(Pro). The misacylated Cys-tRNA(Pro) is not edited by ProRS. The polypeptide is Proline--tRNA ligase (Geobacillus thermodenitrificans (strain NG80-2)).